The chain runs to 1124 residues: Phytochrome A1 (1124 aa).

The segment covering 1–14 (MSSSRPSQSSTTSA) has biased composition (low complexity). Positions 1-20 (MSSSRPSQSSTTSARSKHSA) are disordered. In terms of domain architecture, GAF spans 218-401 (SMERLCDTMV…VFAIHVNKEL (184 aa)). Cys323 serves as a coordination point for phytochromobilin. A PAS 1 domain is found at 617-687 (VTAEMVRLIE…KMLELALQGK (71 aa)). Residues 690–746 (RNVEFEIKTHGPSGDSSPISLIVNACASRDVGDSVVGVCFIAQDITGQKNIMDKFTR) enclose the PAC domain. A PAS 2 domain is found at 747–821 (IEGDYRAIIQ…KNQEAFVNFG (75 aa)). Positions 901-1118 (YIRRQIRNPL…TFIISVELAV (218 aa)) constitute a Histidine kinase domain.

It belongs to the phytochrome family. Homodimer. In terms of processing, contains one covalently linked phytochromobilin chromophore.

In terms of biological role, regulatory photoreceptor which exists in two forms that are reversibly interconvertible by light: the Pr form that absorbs maximally in the red region of the spectrum and the Pfr form that absorbs maximally in the far-red region. Photoconversion of Pr to Pfr induces an array of morphogenic responses, whereas reconversion of Pfr to Pr cancels the induction of those responses. Pfr controls the expression of a number of nuclear genes including those encoding the small subunit of ribulose-bisphosphate carboxylase, chlorophyll A/B binding protein, protochlorophyllide reductase, rRNA, etc. It also controls the expression of its own gene(s) in a negative feedback fashion. The sequence is that of Phytochrome A1 (PHYA1) from Nicotiana tabacum (Common tobacco).